The chain runs to 100 residues: MIREERLLKVIVAPHISEKSTIAAEENNTIVFKVAKDSTKAEVKAAVEKLFEVEVTGVRTLNVKGKTKRTGARFGRRNDWKKAYVTLKEGSELDFVGGAE.

It belongs to the universal ribosomal protein uL23 family. As to quaternary structure, part of the 50S ribosomal subunit. Contacts protein L29, and trigger factor when it is bound to the ribosome.

Functionally, one of the early assembly proteins it binds 23S rRNA. One of the proteins that surrounds the polypeptide exit tunnel on the outside of the ribosome. Forms the main docking site for trigger factor binding to the ribosome. The protein is Large ribosomal subunit protein uL23 of Pseudoalteromonas translucida (strain TAC 125).